Here is a 96-residue protein sequence, read N- to C-terminus: CLAVATA3/ESR (CLE)-related protein 43 (96 aa).

Residues 1–28 (MGCRDILLTFSVALLLISLFQIWLFREG) form the signal peptide. A disordered region spans residues 71 to 96 (FGLNNTNSRFEDSNRRIPSSPDRLHN). An N-linked (GlcNAc...) asparagine glycan is attached at asparagine 74. Proline 88 and proline 91 each carry hydroxyproline. Proline 91 is a glycosylation site (O-linked (Ara...) hydroxyproline).

Belongs to the CLV3/ESR signal peptide family. Post-translationally, the O-glycosylation (arabinosylation) of the hydroxyproline Pro-91 enhances binding affinity of the CLE43p peptide for its receptor. In terms of tissue distribution, expressed at low levels in seedlings.

It is found in the secreted. Its subcellular location is the extracellular space. In terms of biological role, extracellular signal peptide that regulates cell fate. Promotes pollen tube growth prolongation in a SKM1 and SKM2-dependent manner, especially under relatively high temperature (at 30 degrees Celsius), thus conferring tolerance against high temperature probably through the maintenance of mitochondrial activity. This chain is CLAVATA3/ESR (CLE)-related protein 43, found in Arabidopsis thaliana (Mouse-ear cress).